Consider the following 704-residue polypeptide: Metabotropic glutamate receptor-like protein K (704 aa).

An N-terminal signal peptide occupies residues 1–21 (MIKLILSIILIICFIINSIES). The Extracellular segment spans residues 22 to 383 (FKMITLTTGP…SKVEFQRSIQ (362 aa)). Asn66, Asn104, Asn256, Asn286, Asn308, Asn337, Asn343, and Asn368 each carry an N-linked (GlcNAc...) asparagine glycan. The chain crosses the membrane as a helical span at residues 384–404 (IGFSIVSGLLIGFVILMMIGI). The Cytoplasmic portion of the chain corresponds to 405 to 419 (VKYQDTPSIRSASPS). The chain crosses the membrane as a helical span at residues 420-440 (FLNLTLLGGVIIFIGIIVWVA). Residues 441–455 (PISTHQCNARFWLVT) lie on the Extracellular side of the membrane. A helical membrane pass occupies residues 456–476 (IGFSTLIGSLVVKNIRIWLIF). The Cytoplasmic portion of the chain corresponds to 477 to 492 (DNPELKIRTITNNQLY). Residues 493–513 (PWVGLCLVINIVLMSIITTVG) traverse the membrane as a helical segment. Over 514 to 541 (DLKAIEAQGIDSLGKFEYMTICKMNYTG) the chain is Extracellular. Residue Asn538 is glycosylated (N-linked (GlcNAc...) asparagine). A helical transmembrane segment spans residues 542 to 562 (AATLYSILAYFGTLLLVGVFV). Residues 563–578 (SWKIRIVHIEEFSECT) lie on the Cytoplasmic side of the membrane. A helical transmembrane segment spans residues 579–599 (AIAKTLYSISFCLFVIVPLMI). The Extracellular segment spans residues 600–608 (SPQDKQSET). Residues 609 to 629 (IILCVTGIFITTGALLIFFLP) form a helical membrane-spanning segment. Residues 630 to 704 (KFWRIFGNEK…NESSLSNETK (75 aa)) are Cytoplasmic-facing. Disordered regions lie at residues 657-677 (ARAE…SKSS) and 685-704 (SGIE…NETK).

It in the N-terminal section; belongs to the BMP lipoprotein family. This sequence in the C-terminal section; belongs to the G-protein coupled receptor 3 family. GABA-B receptor subfamily.

The protein localises to the membrane. This chain is Metabotropic glutamate receptor-like protein K (grlK), found in Dictyostelium discoideum (Social amoeba).